We begin with the raw amino-acid sequence, 115 residues long: Ig heavy chain V-III region J606 (115 aa).

The 114-residue stretch at 1–114 folds into the Ig-like domain; it reads EVKLEESGGG…WGQGTLVTVS (114 aa). C22 and C98 are oxidised to a cystine.

This is Ig heavy chain V-III region J606 from Mus musculus (Mouse).